We begin with the raw amino-acid sequence, 751 residues long: Semaphorin-3C (751 aa).

A signal peptide spans 1–21 (MAFRTICVLVGVFICSICVKG). One can recognise a Sema domain in the interval 28–511 (RVYLTFDELR…SNEGVSQVSL (484 aa)). The N-linked (GlcNAc...) asparagine glycan is linked to Asn-81. Cys-101 and Cys-112 form a disulfide bridge. Asn-123 carries N-linked (GlcNAc...) asparagine glycosylation. Residues Cys-130 and Cys-139 are joined by a disulfide bond. Residues Asn-252 and Asn-268 are each glycosylated (N-linked (GlcNAc...) asparagine). 2 disulfides stabilise this stretch: Cys-266–Cys-378 and Cys-290–Cys-338. N-linked (GlcNAc...) asparagine glycosylation is present at Asn-465. A disulfide bond links Cys-514 and Cys-532. The Ig-like C2-type domain maps to 571 to 655 (AYRNAAEIVQ…TENSFKQTIA (85 aa)). 2 N-linked (GlcNAc...) asparagine glycosylation sites follow: Asn-585 and Asn-586. The cysteines at positions 592 and 643 are disulfide-linked. The span at 712 to 731 (TRQQHQQGDESQKMRGDYGK) shows a compositional bias: basic and acidic residues. The disordered stretch occupies residues 712–751 (TRQQHQQGDESQKMRGDYGKLKALINSRKSRNRRNQLPES).

The protein belongs to the semaphorin family. As to quaternary structure, interacts with PLXND1.

It is found in the secreted. Binds to plexin family members and plays an important role in the regulation of developmental processes. Required for normal cardiovascular development during embryogenesis. Functions as attractant for growing axons, and thereby plays an important role in axon growth and axon guidance. The polypeptide is Semaphorin-3C (SEMA3C) (Pongo abelii (Sumatran orangutan)).